Here is a 383-residue protein sequence, read N- to C-terminus: MTSASITNTGNETMNLPQMRSIWLDEDEEAEKLYGLQAQQFMGSDDEENLGITFINSDKPVLSNKKNIELPPLSPNSHPSCHHRRSNSNSAKSKESSSSSSSANKTNHKKVFLKLNLLKKKLLGAQPDIRGKGISTPFDFQHISHADTRNGFQDEQLQEPSSLSTEIKDDYTSSSSKRDSKSLNKAFVTERIPANRESKLISRSHENKTSRLSVARSISVTSSNYSKNTQGNNHSINGRVVSTSTMATSIFEYSPNASPKQFKNKSHALGHRYTNSTDSSESSLDFLKNYNFPTLLEDKPILDFLPRSQRSSAYRSLLETPNSNKDSAKAFFPSRQSPLPKRRNSIATPSPQSKFSYSDSPVNHRKSFDDVLYSFNQLEPLQT.

Residues 63-106 form a disordered region; sequence SNKKNIELPPLSPNSHPSCHHRRSNSNSAKSKESSSSSSSANKT. The segment covering 87–105 has biased composition (low complexity); it reads NSNSAKSKESSSSSSSANK. The region spanning 134–147 is the CRIB domain; sequence ISTPFDFQHISHAD. A compositionally biased stretch (polar residues) spans 155–165; it reads EQLQEPSSLST. The segment at 155-189 is disordered; sequence EQLQEPSSLSTEIKDDYTSSSSKRDSKSLNKAFVT. Basic and acidic residues predominate over residues 166–182; that stretch reads EIKDDYTSSSSKRDSKS. 5 positions are modified to phosphoserine: S254, S258, S337, S345, and S367. The tract at residues 319-361 is disordered; that stretch reads ETPNSNKDSAKAFFPSRQSPLPKRRNSIATPSPQSKFSYSDSP. The span at 345–361 shows a compositional bias: polar residues; the sequence is SIATPSPQSKFSYSDSP.

The protein belongs to the BORG/CEP family. Interacts with GTP-bound CDC42.

It localises to the bud neck. It is found in the bud tip. The protein resides in the cytoplasm. Its subcellular location is the cell cortex. The protein localises to the cytoskeleton. Required for cell size and shape control, bud site selection, bud emergence, actin cytoskeletal organization, mitotic spindle orientation/positioning, and mating projection formation in response to mating pheromone. The sequence is that of GTPase-interacting component 2 (GIC2) from Saccharomyces cerevisiae (strain ATCC 204508 / S288c) (Baker's yeast).